The following is a 590-amino-acid chain: DNA mismatch repair protein MutL (590 aa).

The protein belongs to the DNA mismatch repair MutL/HexB family.

Functionally, this protein is involved in the repair of mismatches in DNA. It is required for dam-dependent methyl-directed DNA mismatch repair. May act as a 'molecular matchmaker', a protein that promotes the formation of a stable complex between two or more DNA-binding proteins in an ATP-dependent manner without itself being part of a final effector complex. In Caldanaerobacter subterraneus subsp. tengcongensis (strain DSM 15242 / JCM 11007 / NBRC 100824 / MB4) (Thermoanaerobacter tengcongensis), this protein is DNA mismatch repair protein MutL.